A 505-amino-acid polypeptide reads, in one-letter code: 2,3-bisphosphoglycerate-independent phosphoglycerate mutase (505 aa).

2 residues coordinate Mn(2+): Asp-13 and Ser-63. Ser-63 (phosphoserine intermediate) is an active-site residue. Residues His-124, 153–154 (RD), Arg-183, Arg-189, 254–257 (RADR), and Lys-329 contribute to the substrate site. Residues Asp-395, His-399, Asp-436, His-437, and His-455 each coordinate Mn(2+).

It belongs to the BPG-independent phosphoglycerate mutase family. In terms of assembly, monomer. The cofactor is Mn(2+).

It catalyses the reaction (2R)-2-phosphoglycerate = (2R)-3-phosphoglycerate. Its pathway is carbohydrate degradation; glycolysis; pyruvate from D-glyceraldehyde 3-phosphate: step 3/5. In terms of biological role, catalyzes the interconversion of 2-phosphoglycerate and 3-phosphoglycerate. The protein is 2,3-bisphosphoglycerate-independent phosphoglycerate mutase of Agrobacterium fabrum (strain C58 / ATCC 33970) (Agrobacterium tumefaciens (strain C58)).